Here is a 908-residue protein sequence, read N- to C-terminus: Auxin response factor 6 (908 aa).

The tract at residues 1–21 is disordered; it reads MKLSPSAGGVSDQPPSPPEVA. A DNA-binding region (TF-B3) is located at residues 134–236; it reads FCKTLTASDT…QLLLGIRRAN (103 aa). Residues 525-556 form a disordered region; that stretch reads NEQKPQLQPQQQQQESHQQQPQHQQMQQQKHL. Positions 526–556 are enriched in low complexity; the sequence is EQKPQLQPQQQQQESHQQQPQHQQMQQQKHL. The PB1 domain occupies 777 to 861; that stretch reads ATFVKVYKSG…SCIKILSPQE (85 aa).

The protein belongs to the ARF family. In terms of assembly, homodimers and heterodimers.

The protein localises to the nucleus. Its function is as follows. Auxin response factors (ARFs) are transcriptional factors that bind specifically to the DNA sequence 5'-TGTCTC-3' found in the auxin-responsive promoter elements (AuxREs). This chain is Auxin response factor 6 (ARF6), found in Oryza sativa subsp. indica (Rice).